Reading from the N-terminus, the 204-residue chain is Outer-membrane lipoprotein LolB (204 aa).

The first 16 residues, 1–16 (MLRHLLVFSLIALLAG), serve as a signal peptide directing secretion. Cys17 carries the N-palmitoyl cysteine lipid modification. Residue Cys17 is the site of S-diacylglycerol cysteine attachment.

The protein belongs to the LolB family. As to quaternary structure, monomer.

Its subcellular location is the cell outer membrane. Plays a critical role in the incorporation of lipoproteins in the outer membrane after they are released by the LolA protein. The sequence is that of Outer-membrane lipoprotein LolB from Ectopseudomonas mendocina (strain ymp) (Pseudomonas mendocina).